Reading from the N-terminus, the 298-residue chain is GTP cyclohydrolase FolE2 (298 aa).

Belongs to the GTP cyclohydrolase IV family.

It catalyses the reaction GTP + H2O = 7,8-dihydroneopterin 3'-triphosphate + formate + H(+). It functions in the pathway cofactor biosynthesis; 7,8-dihydroneopterin triphosphate biosynthesis; 7,8-dihydroneopterin triphosphate from GTP: step 1/1. Its function is as follows. Converts GTP to 7,8-dihydroneopterin triphosphate. This is GTP cyclohydrolase FolE2 from Xylella fastidiosa (strain 9a5c).